The chain runs to 187 residues: Orotate phosphoribosyltransferase (187 aa).

5-phospho-alpha-D-ribose 1-diphosphate contacts are provided by residues R98, K99, K102, H104, and E128–S136. Orotate is bound by residues T132 and R160.

The protein belongs to the purine/pyrimidine phosphoribosyltransferase family. PyrE subfamily. As to quaternary structure, homodimer. Mg(2+) is required as a cofactor.

It carries out the reaction orotidine 5'-phosphate + diphosphate = orotate + 5-phospho-alpha-D-ribose 1-diphosphate. It participates in pyrimidine metabolism; UMP biosynthesis via de novo pathway; UMP from orotate: step 1/2. Its function is as follows. Catalyzes the transfer of a ribosyl phosphate group from 5-phosphoribose 1-diphosphate to orotate, leading to the formation of orotidine monophosphate (OMP). The chain is Orotate phosphoribosyltransferase from Rhodopseudomonas palustris (strain BisB18).